A 128-amino-acid polypeptide reads, in one-letter code: Aspartate 1-decarboxylase (128 aa).

The Schiff-base intermediate with substrate; via pyruvic acid role is filled by S25. S25 carries the pyruvic acid (Ser) modification. T57 contributes to the substrate binding site. Y58 serves as the catalytic Proton donor. 73–75 lines the substrate pocket; sequence GAA.

The protein belongs to the PanD family. Heterooctamer of four alpha and four beta subunits. Pyruvate is required as a cofactor. Post-translationally, is synthesized initially as an inactive proenzyme, which is activated by self-cleavage at a specific serine bond to produce a beta-subunit with a hydroxyl group at its C-terminus and an alpha-subunit with a pyruvoyl group at its N-terminus.

The protein resides in the cytoplasm. It catalyses the reaction L-aspartate + H(+) = beta-alanine + CO2. It participates in cofactor biosynthesis; (R)-pantothenate biosynthesis; beta-alanine from L-aspartate: step 1/1. In terms of biological role, catalyzes the pyruvoyl-dependent decarboxylation of aspartate to produce beta-alanine. This is Aspartate 1-decarboxylase from Chlorobium phaeovibrioides (strain DSM 265 / 1930) (Prosthecochloris vibrioformis (strain DSM 265)).